The chain runs to 63 residues: MSRRCAITGKGPMVGNNVSHANNKTKRRFLPNLRTIRVTLEDGTTRKIKVAASTLRTMKKQSN.

Residues 1 to 20 are disordered; it reads MSRRCAITGKGPMVGNNVSH.

The protein belongs to the bacterial ribosomal protein bL28 family.

The protein is Large ribosomal subunit protein bL28 of Campylobacter curvus (strain 525.92).